The sequence spans 366 residues: Cobalt-precorrin-5B C(1)-methyltransferase (366 aa).

Belongs to the CbiD family.

It carries out the reaction Co-precorrin-5B + S-adenosyl-L-methionine = Co-precorrin-6A + S-adenosyl-L-homocysteine. The protein operates within cofactor biosynthesis; adenosylcobalamin biosynthesis; cob(II)yrinate a,c-diamide from sirohydrochlorin (anaerobic route): step 6/10. Catalyzes the methylation of C-1 in cobalt-precorrin-5B to form cobalt-precorrin-6A. This chain is Cobalt-precorrin-5B C(1)-methyltransferase, found in Paraburkholderia phymatum (strain DSM 17167 / CIP 108236 / LMG 21445 / STM815) (Burkholderia phymatum).